Consider the following 320-residue polypeptide: Ferrochelatase (320 aa).

Residues His194 and Glu275 each contribute to the Fe cation site.

This sequence belongs to the ferrochelatase family. As to quaternary structure, monomer.

The protein resides in the cytoplasm. The enzyme catalyses heme b + 2 H(+) = protoporphyrin IX + Fe(2+). It functions in the pathway porphyrin-containing compound metabolism; protoheme biosynthesis; protoheme from protoporphyrin-IX: step 1/1. Its function is as follows. Catalyzes the ferrous insertion into protoporphyrin IX. This chain is Ferrochelatase, found in Salmonella agona (strain SL483).